Here is a 469-residue protein sequence, read N- to C-terminus: RNA-editing ligase 1, mitochondrial (469 aa).

The transit peptide at 1–44 directs the protein to the mitochondrion; it reads MQLQRLGAPLLKRLVGGCIRQSTAPIMPCVVVSGSGGFLTPVRT. Residues 59–61, 86–92, asparagine 92, arginine 111, glutamate 159, phenylalanine 209, and 307–309 each bind ATP; these read IEI, EKVHGTN, and KLR. The active-site N6-AMP-lysine intermediate is lysine 87. A disordered region spans residues 450–469; that stretch reads AAAQSEAIPPLSPAAPTKGE.

The protein belongs to the RNA ligase 2 family. As to quaternary structure, component of the RNA editing complex (editosome), a 1600 kDa complex composed of at least 20 proteins. Interacts with terminal uridylyltransferase MEAT1.

It is found in the mitochondrion. The catalysed reaction is ATP + (ribonucleotide)n-3'-hydroxyl + 5'-phospho-(ribonucleotide)m = (ribonucleotide)n+m + AMP + diphosphate.. Essential for RNA editing. RNA editing in kinetoplastid mitochondria inserts and deletes uridylates at multiple sites in pre-mRNAs as directed by guide RNAs. In Trypanosoma brucei brucei (strain 927/4 GUTat10.1), this protein is RNA-editing ligase 1, mitochondrial (REL1).